Consider the following 877-residue polypeptide: Probable alpha/beta-glucosidase agdC (877 aa).

An N-terminal signal peptide occupies residues M1–A14. N-linked (GlcNAc...) asparagine glycosylation is found at N171, N293, and N373. The Nucleophile role is filled by D422. E425 is an active-site residue. The tract at residues D432–S476 is disordered. Pro residues predominate over residues P447–G463. Residue N508 is glycosylated (N-linked (GlcNAc...) asparagine). D573 acts as the Proton donor in catalysis. N-linked (GlcNAc...) asparagine glycosylation is found at N574, N610, and N744.

The protein belongs to the glycosyl hydrolase 31 family.

It localises to the secreted. The catalysed reaction is Hydrolysis of terminal, non-reducing (1-&gt;4)-linked alpha-D-glucose residues with release of alpha-D-glucose.. It catalyses the reaction Hydrolysis of terminal, non-reducing beta-D-glucosyl residues with release of beta-D-glucose.. Functionally, glucosidase involved in the degradation of cellulosic biomass. Has both alpha- and beta-glucosidase activity. This Aspergillus flavus (strain ATCC 200026 / FGSC A1120 / IAM 13836 / NRRL 3357 / JCM 12722 / SRRC 167) protein is Probable alpha/beta-glucosidase agdC (agdC).